Here is a 303-residue protein sequence, read N- to C-terminus: Phosphoribosylaminoimidazole-succinocarboxamide synthase (303 aa).

This sequence belongs to the SAICAR synthetase family.

The enzyme catalyses 5-amino-1-(5-phospho-D-ribosyl)imidazole-4-carboxylate + L-aspartate + ATP = (2S)-2-[5-amino-1-(5-phospho-beta-D-ribosyl)imidazole-4-carboxamido]succinate + ADP + phosphate + 2 H(+). It functions in the pathway purine metabolism; IMP biosynthesis via de novo pathway; 5-amino-1-(5-phospho-D-ribosyl)imidazole-4-carboxamide from 5-amino-1-(5-phospho-D-ribosyl)imidazole-4-carboxylate: step 1/2. The chain is Phosphoribosylaminoimidazole-succinocarboxamide synthase (ADE1) from Pichia angusta (Yeast).